Consider the following 220-residue polypeptide: Fructose-6-phosphate aldolase (220 aa).

Lys85 (schiff-base intermediate with substrate) is an active-site residue.

Belongs to the transaldolase family. Type 3A subfamily. As to quaternary structure, homodecamer.

The protein localises to the cytoplasm. It carries out the reaction beta-D-fructose 6-phosphate = dihydroxyacetone + D-glyceraldehyde 3-phosphate. In terms of biological role, catalyzes the reversible formation of fructose 6-phosphate from dihydroxyacetone and D-glyceraldehyde 3-phosphate via an aldolization reaction. This Salmonella gallinarum (strain 287/91 / NCTC 13346) protein is Fructose-6-phosphate aldolase.